Consider the following 755-residue polypeptide: MANESKCPFNHAAGGGTTNRDWWPNQLNLKILSQHSPASDPMGKDFDYAKAFKSLDFQALKRDLTALMTDSQEWWPADFGHYGPLFIRMAWHSAGTYRTADGRGGAGSGQQRFAPLNSWPDNVSLDKARRLLWPIKQKYGRNISWADLIVLTGNVALESMGFKTFGFSGGRADVWEPDEDVYWGSENKWLGGDNRYGKDPESMQPPGEGTLVAEPAEHGNEESRTNQGERNLENPLAAVQMGLIYVNPEGPEGNPDPVASAKDIRETFGRMAMNDEETVALIAGGHAFGKTHGAGPADNVGPEPEAAGLEEQGLGWKNSFGTGKGADTITSGLEVTWTTTPTKWSNNYLENLFGFEWELTKSPAGAHQWKPKNGAGAGTIPHAHDPNKRIDPTMLTSDLALRFDPTYEKISRRFLANPDQLADAFARAWYKLIHRDMGPLSRYLGPELPQEELLWQDPIPEATHPLVDDSDIRALKGKILASGLSVSELVSTAWAAASTFRGSDKRGGANGGRLRLAPQKFWQANQPEQLDKVLKVLEGIQNEFNAGAAGKQVSLADLIVLAGNAGVEQAAQNAGHTVTVPFNPGRTDATQEQTDVESFGFLEPHTDGFRNYAASTYRVPAEALLIDKAQLLTLSAPEMTVLIGGLRVLDTNVGKTQHGVFTDRPGTLTNDFFRNLLDMGVEWKPTSKTEFEGRDRKTGSVKWTATRVDLVFGSNSVLRALAEVYASSDAKEQFVTDFVAAWAKVMDLDRFDLRQ.

Residues 91 to 245 (WHSAGTYRTA…LAAVQMGLIY (155 aa)) constitute a cross-link (tryptophyl-tyrosyl-methioninium (Trp-Tyr) (with M-271)). Catalysis depends on His-92, which acts as the Proton acceptor. A disordered region spans residues 193-229 (DNRYGKDPESMQPPGEGTLVAEPAEHGNEESRTNQGE). The segment covering 215 to 224 (PAEHGNEESR) has biased composition (basic and acidic residues). The tryptophyl-tyrosyl-methioninium (Tyr-Met) (with W-91) cross-link spans 245 to 271 (YVNPEGPEGNPDPVASAKDIRETFGRM). His-286 serves as a coordination point for heme.

Belongs to the peroxidase family. Peroxidase/catalase subfamily. In terms of assembly, homodimer or homotetramer. Heme b serves as cofactor. Post-translationally, formation of the three residue Trp-Tyr-Met cross-link is important for the catalase, but not the peroxidase activity of the enzyme.

It catalyses the reaction H2O2 + AH2 = A + 2 H2O. The catalysed reaction is 2 H2O2 = O2 + 2 H2O. Bifunctional enzyme with both catalase and broad-spectrum peroxidase activity. This chain is Catalase-peroxidase, found in Pseudomonas fluorescens (strain Pf0-1).